The chain runs to 113 residues: U11-theraphotoxin-Hhn1p (113 aa).

An N-terminal signal peptide occupies residues Met-1–Ala-21. A propeptide spanning residues Asp-22–Arg-74 is cleaved from the precursor. Positions Glu-61–Asp-83 are disordered. Intrachain disulfides connect Cys-75/Cys-90, Cys-82/Cys-95, and Cys-89/Cys-110.

The protein belongs to the neurotoxin 14 (magi-1) family. 01 (HNTX-16) subfamily. In terms of tissue distribution, expressed by the venom gland.

The protein resides in the secreted. Its function is as follows. Probable ion channel inhibitor. The chain is U11-theraphotoxin-Hhn1p from Cyriopagopus hainanus (Chinese bird spider).